A 922-amino-acid polypeptide reads, in one-letter code: Metabotropic glutamate receptor 7 (922 aa).

A signal peptide spans 1–34; it reads MVQLRKLLRVLTLMKFPCCVLEVLLCALAAAARG. The Extracellular portion of the chain corresponds to 35–590; that stretch reads QEMYAPHSIR…IIKLEWHSPW (556 aa). A disulfide bond links C67 and C109. N98 carries N-linked (GlcNAc...) asparagine glycosylation. L-glutamate-binding positions include S159, 180 to 182, Y230, and D314; that span reads AST. 7 cysteine pairs are disulfide-bonded: C249–C541, C374–C390, C430–C437, C523–C542, C527–C545, C548–C560, and C563–C576. Position 407 (K407) interacts with L-glutamate. N458 and N486 each carry an N-linked (GlcNAc...) asparagine glycan. N-linked (GlcNAc...) asparagine glycosylation occurs at N572. The chain crosses the membrane as a helical span at residues 591–615; sequence AVIPVFLAMLGIIATIFVMATFIRY. At 616–627 the chain is on the cytoplasmic side; sequence NDTPIVRASGRE. Residues 628–648 form a helical membrane-spanning segment; that stretch reads LSYVLLTGIFLCYIITFLMIA. At 649–654 the chain is on the extracellular side; sequence KPDVAV. Residues 655-675 form a helical membrane-spanning segment; that stretch reads CSFRRVFLGLGMCISYAALLT. The Cytoplasmic portion of the chain corresponds to 676–702; the sequence is KTNRIYRIFEQGKKSVTAPRLISPTSQ. The helical transmembrane segment at 703–723 threads the bilayer; the sequence is LAITSSLISVQLLGVFIWFGV. Residues 724–753 lie on the Extracellular side of the membrane; the sequence is DPPNIIIDYDEHKTMNPEQARGVLKCDITD. A helical transmembrane segment spans residues 754–775; sequence LQIICSLGYSILLMVTCTVYAI. Over 776–788 the chain is Cytoplasmic; the sequence is KTRGVPENFNEAK. The helical transmembrane segment at 789-810 threads the bilayer; it reads PIGFTMYTTCIVWLAFIPIFFG. The Extracellular segment spans residues 811–825; it reads TAQSAEKLYIQTTTL. A helical membrane pass occupies residues 826–850; sequence TISMNLSASVALGMLYMPKVYIIIF. At 851–922 the chain is on the cytoplasmic side; sequence HPELNVQKRK…VTWYTIPPTV (72 aa).

Belongs to the G-protein coupled receptor 3 family. Homodimer. Interacts with PICK1.

The protein localises to the cell membrane. G-protein coupled receptor activated by glutamate that regulates axon outgrowth through the MAPK-cAMP-PKA signaling pathway during neuronal development. Ligand binding causes a conformation change that triggers signaling via guanine nucleotide-binding proteins (G proteins) and modulates the activity of downstream effectors, such as adenylate cyclase that it inhibits. This Pongo abelii (Sumatran orangutan) protein is Metabotropic glutamate receptor 7 (GRM7).